Consider the following 73-residue polypeptide: Translation initiation factor IF-1 (73 aa).

The 73-residue stretch at 1–73 folds into the S1-like domain; sequence MAKKDGVIEI…TRGRIVYRYK (73 aa).

It belongs to the IF-1 family. Component of the 30S ribosomal translation pre-initiation complex which assembles on the 30S ribosome in the order IF-2 and IF-3, IF-1 and N-formylmethionyl-tRNA(fMet); mRNA recruitment can occur at any time during PIC assembly.

It is found in the cytoplasm. Functionally, one of the essential components for the initiation of protein synthesis. Stabilizes the binding of IF-2 and IF-3 on the 30S subunit to which N-formylmethionyl-tRNA(fMet) subsequently binds. Helps modulate mRNA selection, yielding the 30S pre-initiation complex (PIC). Upon addition of the 50S ribosomal subunit IF-1, IF-2 and IF-3 are released leaving the mature 70S translation initiation complex. In Paenarthrobacter aurescens (strain TC1), this protein is Translation initiation factor IF-1.